We begin with the raw amino-acid sequence, 503 residues long: ATP synthase subunit alpha (503 aa).

170–177 (GDKQTGKT) is a binding site for ATP.

This sequence belongs to the ATPase alpha/beta chains family. F-type ATPases have 2 components, CF(1) - the catalytic core - and CF(0) - the membrane proton channel. CF(1) has five subunits: alpha(3), beta(3), gamma(1), delta(1), epsilon(1). CF(0) has three main subunits: a(1), b(2) and c(9-12). The alpha and beta chains form an alternating ring which encloses part of the gamma chain. CF(1) is attached to CF(0) by a central stalk formed by the gamma and epsilon chains, while a peripheral stalk is formed by the delta and b chains.

The protein localises to the cell inner membrane. The enzyme catalyses ATP + H2O + 4 H(+)(in) = ADP + phosphate + 5 H(+)(out). Its function is as follows. Produces ATP from ADP in the presence of a proton gradient across the membrane. The alpha chain is a regulatory subunit. This is ATP synthase subunit alpha from Helicobacter pylori (strain G27).